We begin with the raw amino-acid sequence, 247 residues long: tRNA (guanine-N(1)-)-methyltransferase (247 aa).

S-adenosyl-L-methionine is bound by residues G115 and 134–139; that span reads IGDFVL.

The protein belongs to the RNA methyltransferase TrmD family. Homodimer.

The protein localises to the cytoplasm. It catalyses the reaction guanosine(37) in tRNA + S-adenosyl-L-methionine = N(1)-methylguanosine(37) in tRNA + S-adenosyl-L-homocysteine + H(+). Its function is as follows. Specifically methylates guanosine-37 in various tRNAs. The chain is tRNA (guanine-N(1)-)-methyltransferase from Anaeromyxobacter dehalogenans (strain 2CP-C).